We begin with the raw amino-acid sequence, 142 residues long: Hemoglobin subunit alpha-A (142 aa).

In terms of domain architecture, Globin spans 2-142 (VLSAADKGNV…VATVLTAKYR (141 aa)). O2 is bound at residue His-59. A heme b-binding site is contributed by His-88.

The protein belongs to the globin family. As to quaternary structure, heterotetramer of two alpha chains and two beta chains. Red blood cells.

In terms of biological role, involved in oxygen transport from the lung to the various peripheral tissues. The protein is Hemoglobin subunit alpha-A (HBAA) of Anseranas semipalmata (Magpie goose).